We begin with the raw amino-acid sequence, 500 residues long: Glycerol kinase (500 aa).

T11 serves as a coordination point for ADP. Positions 11, 12, and 13 each coordinate ATP. T11 provides a ligand contact to sn-glycerol 3-phosphate. Position 15 (R15) interacts with ADP. Residues R81, E82, Y133, and D242 each contribute to the sn-glycerol 3-phosphate site. 5 residues coordinate glycerol: R81, E82, Y133, D242, and Q243. ADP contacts are provided by T264 and G307. ATP-binding residues include T264, G307, Q311, and G411. Residue G411 participates in ADP binding.

Belongs to the FGGY kinase family.

The enzyme catalyses glycerol + ATP = sn-glycerol 3-phosphate + ADP + H(+). It participates in polyol metabolism; glycerol degradation via glycerol kinase pathway; sn-glycerol 3-phosphate from glycerol: step 1/1. Its activity is regulated as follows. Inhibited by fructose 1,6-bisphosphate (FBP). Functionally, key enzyme in the regulation of glycerol uptake and metabolism. Catalyzes the phosphorylation of glycerol to yield sn-glycerol 3-phosphate. This chain is Glycerol kinase, found in Bradyrhizobium sp. (strain ORS 278).